A 450-amino-acid chain; its full sequence is Phosphoglucosamine mutase (450 aa).

Catalysis depends on Ser-103, which acts as the Phosphoserine intermediate. The Mg(2+) site is built by Ser-103, Asp-243, Asp-245, and Asp-247. Phosphoserine is present on Ser-103.

Belongs to the phosphohexose mutase family. Mg(2+) is required as a cofactor. Activated by phosphorylation.

It carries out the reaction alpha-D-glucosamine 1-phosphate = D-glucosamine 6-phosphate. Catalyzes the conversion of glucosamine-6-phosphate to glucosamine-1-phosphate. In Lactobacillus delbrueckii subsp. bulgaricus (strain ATCC 11842 / DSM 20081 / BCRC 10696 / JCM 1002 / NBRC 13953 / NCIMB 11778 / NCTC 12712 / WDCM 00102 / Lb 14), this protein is Phosphoglucosamine mutase.